Here is a 462-residue protein sequence, read N- to C-terminus: Protein ultraspiracle homolog (462 aa).

The interval 1 to 113 (MSSVAKKDKR…NHPLSGSKHL (113 aa)) is modulating. 2 consecutive NR C4-type zinc fingers follow at residues 114–134 (CSICGDRASGKHYGVYSCEGC) and 150–174 (CREDKNCIIDKRQRNRCQYCRYQKC). Positions 114-179 (CSICGDRASG…RYQKCLACGM (66 aa)) form a DNA-binding region, nuclear receptor. A hinge region spans residues 180–201 (KREAVQEERQRAARRTEDAHPS). The NR LBD domain maps to 204–453 (VQELSIERLL…SYIRDALCNH (250 aa)).

It belongs to the nuclear hormone receptor family. NR2 subfamily. Heterodimer of USP and ECR. In terms of tissue distribution, abundant expression seen in males and ovaries.

It is found in the nucleus. The polypeptide is Protein ultraspiracle homolog (USP) (Bombyx mori (Silk moth)).